Consider the following 167-residue polypeptide: uncharacterized protein (167 aa).

In terms of domain architecture, N-acetyltransferase spans 9 to 167 (PVMRRLTLQD…DCEVRMLREL (159 aa)).

This sequence belongs to the acetyltransferase family.

This is an uncharacterized protein from Escherichia coli (strain K12).